The chain runs to 190 residues: Peptidoglycan recognition protein 1 (190 aa).

A signal peptide spans 1–21; the sequence is MSRRYTPLAWVLLALLGLGAA. Position 22 is a pyrrolidone carboxylic acid (Gln22). Intrachain disulfides connect Cys24/Cys148, Cys40/Cys85, and Cys61/Cys67. Residues 46-174 enclose the N-acetylmuramoyl-L-alanine amidase domain; sequence QPVRYVVVSH…RDVQQTLSPG (129 aa).

This sequence belongs to the N-acetylmuramoyl-L-alanine amidase 2 family. In terms of assembly, homodimer; disulfide-linked. As to expression, synthesized only in bone marrow. The mature protein is stored in the cytoplasmic granules of eosinophils and neutrophils but is absent from monocytes, lymphocytes, or platelets.

It localises to the secreted. It is found in the cytoplasmic granule. Innate immunity protein that plays several important functions in antimicrobial and antitumor defense systems. Acts as a pattern receptor that binds to murein peptidoglycans (PGN) of Gram-positive bacteria and thus provides bactericidal activity. Forms an equimolar complex with heat shock protein HSPA1A and induces programmed cell death through apoptosis and necroptosis in tumor cell lines by activating the TNFR1 receptor on the target cell membrane. In addition, acts in complex with the Ca(2+)-binding protein S100A4 as a chemoattractant able to induce lymphocyte movement. Mechanistically, this complex acts as a ligand of the chemotactic receptors CCR5 and CXCR3 which are present on the cells of the immune system. Also promotes the activation of lymphocytes that become able to kill virus-infected cells as well as tumor cells by modulating the spectrum of their target-cell specificity. Induction of cytotoxicity on monocyte surface requires interaction with TREM1 receptor. The chain is Peptidoglycan recognition protein 1 (PGLYRP1) from Bos taurus (Bovine).